A 172-amino-acid polypeptide reads, in one-letter code: Photosystem I assembly protein Ycf3 (172 aa).

3 TPR repeats span residues 35–70 (AFTYYRDGAIMSAQSEGNYAEALQNYYEATRSEIDP), 74–107 (SYILYNIGLIHTSNGEHTKALEYYFQAIERNPFL), and 122–155 (GERAILRGDSEIAEAWFDQAAEYWKQAIGLTPGN).

The protein belongs to the Ycf3 family.

The protein localises to the plastid. Its subcellular location is the chloroplast thylakoid membrane. Functionally, essential for the assembly of the photosystem I (PSI) complex. May act as a chaperone-like factor to guide the assembly of the PSI subunits. This chain is Photosystem I assembly protein Ycf3, found in Dioscorea elephantipes (Elephant's foot yam).